The sequence spans 66 residues: Large ribosomal subunit protein bL31 (66 aa).

4 residues coordinate Zn(2+): Cys16, Cys18, Cys36, and Cys39.

It belongs to the bacterial ribosomal protein bL31 family. Type A subfamily. In terms of assembly, part of the 50S ribosomal subunit. The cofactor is Zn(2+).

In terms of biological role, binds the 23S rRNA. The chain is Large ribosomal subunit protein bL31 from Nitratiruptor sp. (strain SB155-2).